A 224-amino-acid chain; its full sequence is Cerebellin-2 (224 aa).

The signal sequence occupies residues 1 to 51; the sequence is MPAPGQGPRGPLLSMPGRRGALREPADFGSSLGAVLALLLLLLPACCPVRA. N53 and N110 each carry an N-linked (GlcNAc...) asparagine glycan. Positions 88-224 constitute a C1q domain; the sequence is SGSAKVAFSA…TFSGFLVFPL (137 aa).

In terms of assembly, homohexamer; disulfide-linked homotrimers. The trimers are assembled via the globular C1q domains. The trimers associate via N-terminal cysteine residues to form disulfide-linked hexamers. May form homooligomers or heterooligomers with CBLN1 and CBLN3 prior to secretion. Once secreted, does not interact with other CBLN family members. Interacts with GRID2, and more weakly with GRID1. Interacts with NRXN1 and NRXN2 long and short isoforms produced by alternative promoter usage. Weakly interacts with NRXN3 short isoform and not at all with NRXN3 long isoform. Expressed in various brain regions with higher levels in the olfactory bulb, cerebral cortex, certain thalamic and hypothalamic nuclei, superior and inferior colliculi and some brainstem nuclei. Highly expressed in the dorsal medial habenula.

The protein localises to the secreted. In terms of biological role, acts as a synaptic organizer in specific subsets of neurons in the brain. Essential for long-term maintenance but not establishment of excitatory synapses. Functions as part of a trans-synaptic complex by binding to postsynaptic GRID1 and presynaptic neurexins. This interaction helps regulate the activity of NMDA and AMPA receptors at hippocampal synapses without affecting synapse formation. NRXN1B-CBLN2-GRID1 complex transduce presynaptic signals into postsynaptic NMDAR response. NRXN3B-CBLN2-GRID1 complex transduce presynaptic signals into postsynaptic AMPAR response. The chain is Cerebellin-2 (Cbln2) from Mus musculus (Mouse).